Consider the following 419-residue polypeptide: Ras association domain-containing protein 8 (419 aa).

The Ras-associating domain occupies 1 to 82; it reads MELKVWVDGV…VQLILRRTGP (82 aa). Residues serine 105 and serine 129 each carry the phosphoserine modification. Residue threonine 131 is modified to Phosphothreonine. The disordered stretch occupies residues 372–399; sequence ASQADIETEAPFQSGSLKRPGSSRQLPS. Residues 382 to 399 are compositionally biased toward polar residues; that stretch reads PFQSGSLKRPGSSRQLPS. The residue at position 387 (serine 387) is a Phosphoserine.

The sequence is that of Ras association domain-containing protein 8 (Rassf8) from Mus musculus (Mouse).